Here is a 688-residue protein sequence, read N- to C-terminus: Glycine--tRNA ligase beta subunit (688 aa).

This sequence belongs to the class-II aminoacyl-tRNA synthetase family. In terms of assembly, tetramer of two alpha and two beta subunits.

It localises to the cytoplasm. It carries out the reaction tRNA(Gly) + glycine + ATP = glycyl-tRNA(Gly) + AMP + diphosphate. The polypeptide is Glycine--tRNA ligase beta subunit (Syntrophotalea carbinolica (strain DSM 2380 / NBRC 103641 / GraBd1) (Pelobacter carbinolicus)).